Reading from the N-terminus, the 212-residue chain is 3-isopropylmalate dehydratase small subunit (212 aa).

The protein belongs to the LeuD family. LeuD type 1 subfamily. As to quaternary structure, heterodimer of LeuC and LeuD.

It carries out the reaction (2R,3S)-3-isopropylmalate = (2S)-2-isopropylmalate. It participates in amino-acid biosynthesis; L-leucine biosynthesis; L-leucine from 3-methyl-2-oxobutanoate: step 2/4. Functionally, catalyzes the isomerization between 2-isopropylmalate and 3-isopropylmalate, via the formation of 2-isopropylmaleate. The polypeptide is 3-isopropylmalate dehydratase small subunit (Pseudomonas aeruginosa (strain LESB58)).